The primary structure comprises 293 residues: Glutamyl-Q tRNA(Asp) synthetase (293 aa).

L-glutamate is bound by residues 26-30 (RYAPS) and D62. A 'HIGH' region motif is present at residues 29–39 (PSPTGALHLGN). 4 residues coordinate Zn(2+): C118, C120, Y131, and C135. 2 residues coordinate L-glutamate: Y178 and R196. The short motif at 234 to 238 (KLSKR) is the 'KMSKS' region element. Residue K237 participates in ATP binding.

The protein belongs to the class-I aminoacyl-tRNA synthetase family. GluQ subfamily. Zn(2+) is required as a cofactor.

Catalyzes the tRNA-independent activation of glutamate in presence of ATP and the subsequent transfer of glutamate onto a tRNA(Asp). Glutamate is transferred on the 2-amino-5-(4,5-dihydroxy-2-cyclopenten-1-yl) moiety of the queuosine in the wobble position of the QUC anticodon. This is Glutamyl-Q tRNA(Asp) synthetase from Parasynechococcus marenigrum (strain WH8102).